We begin with the raw amino-acid sequence, 211 residues long: CASP-like protein 3A1 (211 aa).

Residues 1–45 (MGSIGNGRSDSVVGIQMPPAGSKMVLEPEALQVTTSPVPRWPRLG) are Cytoplasmic-facing. Residues 46 to 66 (VVMVATRAVAMVMALLSMSLM) traverse the membrane as a helical segment. The Extracellular segment spans residues 67-95 (VSSKQRGILTIFGIEIPLDANWSFSYSLQ). N-linked (GlcNAc...) asparagine glycosylation is present at Asn-87. Residues 96-116 (FLVAMSTASAAYSLAQLLLIA) traverse the membrane as a helical segment. At 117–131 (HKAVKKSPIVPSRRH) the chain is on the cytoplasmic side. A helical membrane pass occupies residues 132–152 (AWLLFAGDQVFSLAMMSAGSA). Over 153 to 186 (AAAVANLNRTGIRHTALPNFCKPLPRFCDLSAVS) the chain is Extracellular. An N-linked (GlcNAc...) asparagine glycan is attached at Asn-160. The chain crosses the membrane as a helical span at residues 187-207 (IACAFLSCVFLAASAVIDVIW). Over 208 to 211 (LSSP) the chain is Cytoplasmic.

This sequence belongs to the Casparian strip membrane proteins (CASP) family. As to quaternary structure, homodimer and heterodimers.

Its subcellular location is the cell membrane. The chain is CASP-like protein 3A1 from Sorghum bicolor (Sorghum).